Consider the following 364-residue polypeptide: 3-methyl-2-oxobutanoate hydroxymethyltransferase 1, mitochondrial (364 aa).

A mitochondrion-targeting transit peptide spans 1-59 (MMMMMRRAFRHLARQQRRPLSHVPESAVYGGPRPQDVGAAAGAGAGAGATRRVTVTTLR). 2 residues coordinate Mg(2+): D94 and D133. Residues 94-95 (DS), D133, and K163 each bind 3-methyl-2-oxobutanoate. E165 contacts Mg(2+). Catalysis depends on E233, which acts as the Proton acceptor.

Belongs to the PanB family. It depends on Mg(2+) as a cofactor.

The protein resides in the mitochondrion. The catalysed reaction is 3-methyl-2-oxobutanoate + (6R)-5,10-methylene-5,6,7,8-tetrahydrofolate + H2O = 2-dehydropantoate + (6S)-5,6,7,8-tetrahydrofolate. Its pathway is cofactor biosynthesis; (R)-pantothenate biosynthesis; (R)-pantoate from 3-methyl-2-oxobutanoate: step 1/2. In terms of biological role, catalyzes the reversible reaction in which hydroxymethyl group from 5,10-methylenetetrahydrofolate is transferred onto alpha-ketoisovalerate to form ketopantoate. The polypeptide is 3-methyl-2-oxobutanoate hydroxymethyltransferase 1, mitochondrial (KPHMT1) (Oryza sativa subsp. japonica (Rice)).